The primary structure comprises 215 residues: Pyridoxine/pyridoxamine 5'-phosphate oxidase (215 aa).

Residues arginine 9–tyrosine 12 and lysine 67 contribute to the substrate site. Residues arginine 62–lysine 67, phenylalanine 77–threonine 78, lysine 84, and glutamine 106 contribute to the FMN site. Substrate is bound by residues tyrosine 124, arginine 128, and serine 132. Residues glutamine 141 to serine 142 and tryptophan 186 each bind FMN. Arginine 192–histidine 194 lines the substrate pocket. Residue arginine 196 coordinates FMN.

The protein belongs to the pyridoxamine 5'-phosphate oxidase family. As to quaternary structure, homodimer. FMN serves as cofactor.

The catalysed reaction is pyridoxamine 5'-phosphate + O2 + H2O = pyridoxal 5'-phosphate + H2O2 + NH4(+). It catalyses the reaction pyridoxine 5'-phosphate + O2 = pyridoxal 5'-phosphate + H2O2. The protein operates within cofactor metabolism; pyridoxal 5'-phosphate salvage; pyridoxal 5'-phosphate from pyridoxamine 5'-phosphate: step 1/1. Its pathway is cofactor metabolism; pyridoxal 5'-phosphate salvage; pyridoxal 5'-phosphate from pyridoxine 5'-phosphate: step 1/1. Functionally, catalyzes the oxidation of either pyridoxine 5'-phosphate (PNP) or pyridoxamine 5'-phosphate (PMP) into pyridoxal 5'-phosphate (PLP). This chain is Pyridoxine/pyridoxamine 5'-phosphate oxidase, found in Chromohalobacter salexigens (strain ATCC BAA-138 / DSM 3043 / CIP 106854 / NCIMB 13768 / 1H11).